The sequence spans 336 residues: UDP-3-O-acylglucosamine N-acyltransferase (336 aa).

His-237 serves as the catalytic Proton acceptor.

The protein belongs to the transferase hexapeptide repeat family. LpxD subfamily. Homotrimer.

The enzyme catalyses a UDP-3-O-[(3R)-3-hydroxyacyl]-alpha-D-glucosamine + a (3R)-hydroxyacyl-[ACP] = a UDP-2-N,3-O-bis[(3R)-3-hydroxyacyl]-alpha-D-glucosamine + holo-[ACP] + H(+). Its pathway is bacterial outer membrane biogenesis; LPS lipid A biosynthesis. In terms of biological role, catalyzes the N-acylation of UDP-3-O-acylglucosamine using 3-hydroxyacyl-ACP as the acyl donor. Is involved in the biosynthesis of lipid A, a phosphorylated glycolipid that anchors the lipopolysaccharide to the outer membrane of the cell. This chain is UDP-3-O-acylglucosamine N-acyltransferase, found in Alcanivorax borkumensis (strain ATCC 700651 / DSM 11573 / NCIMB 13689 / SK2).